Consider the following 203-residue polypeptide: MGEEVQIGATAVGIKAKDGVVLAAEKRVSYGFYTLSSAGKKVFVIDDKLAIASAGIIADMQTLAKILKLNAKAYELEMKRKPSTHSMARLLSVIMFSRRFMPFFAEVLVGGIDEEGPHLIVMDPLGSLIEDNYAALGTGAKLAVAVLDTGYRPDITVEEAKKLAVQALKAAIERDPVSGGGIDLAIVDKNGAREEEVRVQLLI.

Residues 1–9 constitute a propeptide, removed in mature form; by autocatalysis; that stretch reads MGEEVQIGA. Catalysis depends on Thr10, which acts as the Nucleophile.

This sequence belongs to the peptidase T1B family. The 20S proteasome core is composed of 14 alpha and 14 beta subunits that assemble into four stacked heptameric rings, resulting in a barrel-shaped structure. The two inner rings, each composed of seven catalytic beta subunits, are sandwiched by two outer rings, each composed of seven alpha subunits. The catalytic chamber with the active sites is on the inside of the barrel. Has a gated structure, the ends of the cylinder being occluded by the N-termini of the alpha-subunits. Is capped at one or both ends by the proteasome regulatory ATPase, PAN.

It localises to the cytoplasm. It carries out the reaction Cleavage of peptide bonds with very broad specificity.. With respect to regulation, the formation of the proteasomal ATPase PAN-20S proteasome complex, via the docking of the C-termini of PAN into the intersubunit pockets in the alpha-rings, triggers opening of the gate for substrate entry. Interconversion between the open-gate and close-gate conformations leads to a dynamic regulation of the 20S proteasome proteolysis activity. Component of the proteasome core, a large protease complex with broad specificity involved in protein degradation. In Pyrobaculum aerophilum (strain ATCC 51768 / DSM 7523 / JCM 9630 / CIP 104966 / NBRC 100827 / IM2), this protein is Proteasome subunit beta 2.